We begin with the raw amino-acid sequence, 1102 residues long: Voltage-gated delayed rectifier potassium channel KCNH8 (1102 aa).

The Cytoplasmic segment spans residues 1 to 225 (MPVMKGLLAP…HFSTFKAGWD (225 aa)). The PAS domain maps to 18 to 90 (IATRFDGTHS…LQIEKSLEEK (73 aa)). Positions 93-145 (FKGEIMFYKKNGAPFWCLLDIVPIKNEKGDVVLFLASFKDITDTKVKITSEDK) constitute a PAC domain. The span at 142–151 (SEDKKEDRTK) shows a compositional bias: basic and acidic residues. Residues 142–162 (SEDKKEDRTKGRSRAGSHFDS) are disordered. A helical membrane pass occupies residues 226–246 (WLILLATFYVAVTVPYNVCFI). Residues 247–255 (GNEDLSTTR) lie on the Extracellular side of the membrane. Residues 256–276 (STTVSDIAVEILFIIDIILNF) form a helical membrane-spanning segment. Topologically, residues 277 to 298 (RTTYVSKSGQVIFEARSICIHY) are cytoplasmic. A helical transmembrane segment spans residues 299–319 (VTTWFIIDLIAALPFDLLYAF). The N-linked (GlcNAc...) asparagine glycan is linked to Asn320. The Extracellular segment spans residues 320 to 327 (NVTVVSLV). The chain crosses the membrane as a helical; Voltage-sensor span at residues 328–348 (HLLKTVRLLRLLRLLQKLDRY). Residues 349-357 (SQHSTIVLT) lie on the Cytoplasmic side of the membrane. The chain crosses the membrane as a helical span at residues 358-378 (LLMSMFALLAHWMACIWYVIG). Residues 379–419 (KMEREDNSLLKWEVGWLHELGKRLESPYYGNNTLGGPSIRS) are Extracellular-facing. N-linked (GlcNAc...) asparagine glycosylation is present at Asn409. The segment at residues 420–440 (AYIAALYFTLSSLTSVGFGNV) is an intramembrane region (pore-forming). The Selectivity filter motif lies at 434 to 439 (SVGFGN). Residues 441–448 (SANTDAEK) are Extracellular-facing. A helical transmembrane segment spans residues 449–469 (IFSICTMLIGALMHALVFGNV). Over 470–1102 (TAIIQRMYSR…DVKDSKAINV (633 aa)) the chain is Cytoplasmic. The interval 551 to 668 (LFECASRGCL…HKFVEDIQHD (118 aa)) is cNMP-binding domain. Residues 684–693 (RLSNKSTVSQ) are compositionally biased toward polar residues. Disordered stretches follow at residues 684-743 (RLSN…KKTG), 764-841 (HSPI…PEPR), and 960-991 (LVGS…YSPS). Positions 710–723 (VEDEEEEEVEEEET) are enriched in acidic residues. Polar residues predominate over residues 724–737 (TSLSPIYTRGSSVS). A compositionally biased stretch (basic and acidic residues) spans 968–984 (TEAHEQNPADSELHHSP).

Belongs to the potassium channel family. H (Eag) (TC 1.A.1.20) subfamily. Kv12.1/KCNH8 sub-subfamily. As to quaternary structure, the potassium channel is probably composed of a homo- or heterotetrameric complex of pore-forming alpha subunits that can associate with modulating beta subunits.

It localises to the membrane. The enzyme catalyses K(+)(in) = K(+)(out). In terms of biological role, pore-forming (alpha) subunit of a voltage-gated delayed rectifier potassium channel that mediates outward-rectifying potassium currents. Elicits a slowly activating, non-inactivating and slowly deactivation outwards potassium current at depolarizating voltages from -30 mV to +50mV. Shows no obvious change in the activation rate from different holding potentials. Activation is strongly dependent on the pH of the external solution. This Mus musculus (Mouse) protein is Voltage-gated delayed rectifier potassium channel KCNH8.